Here is a 347-residue protein sequence, read N- to C-terminus: Molybdenum cofactor biosynthesis bifunctional protein (347 aa).

A molybdenum cofactor biosynthesis protein C region spans residues 1–158; that stretch reads MFTHLDENQQ…EKTGGKADVS (158 aa). Substrate contacts are provided by residues 75-77 and 116-117; these read FCH and ME. The active-site For MoaC activity is aspartate 131. Residues 159–347 form a molybdenum cofactor guanylyltransferase region; sequence QTPLYGLVLT…NSPEDYGQIN (189 aa). GTP is bound by residues 167–169, lysine 179, aspartate 226, and aspartate 255; that span reads LTG. Aspartate 255 provides a ligand contact to Mg(2+).

It in the N-terminal section; belongs to the MoaC family. The protein in the C-terminal section; belongs to the MobA family. Mg(2+) is required as a cofactor.

It localises to the cytoplasm. It catalyses the reaction Mo-molybdopterin + GTP + H(+) = Mo-molybdopterin guanine dinucleotide + diphosphate. The enzyme catalyses (8S)-3',8-cyclo-7,8-dihydroguanosine 5'-triphosphate = cyclic pyranopterin phosphate + diphosphate. Its pathway is cofactor biosynthesis; molybdopterin biosynthesis. Functionally, catalyzes the conversion of (8S)-3',8-cyclo-7,8-dihydroguanosine 5'-triphosphate to cyclic pyranopterin monophosphate (cPMP). Transfers a GMP moiety from GTP to Mo-molybdopterin (Mo-MPT) cofactor (Moco or molybdenum cofactor) to form Mo-molybdopterin guanine dinucleotide (Mo-MGD) cofactor. This chain is Molybdenum cofactor biosynthesis bifunctional protein (moaC/mobA), found in Synechocystis sp. (strain ATCC 27184 / PCC 6803 / Kazusa).